Reading from the N-terminus, the 295-residue chain is uncharacterized protein (295 aa).

A signal peptide spans 1–19; the sequence is MFKKYIFILILFIASIARA. Residues 275 to 295 are disordered; that stretch reads RNNPPLKNNNAKGKNPYDTNK. Residues 276–295 are compositionally biased toward low complexity; sequence NNPPLKNNNAKGKNPYDTNK.

This is an uncharacterized protein from Rickettsia conorii (strain ATCC VR-613 / Malish 7).